Consider the following 191-residue polypeptide: Thymidine kinase (191 aa).

ATP contacts are provided by residues 15–22 (GSMFSGKS) and 88–91 (DEVQ). Glutamate 89 functions as the Proton acceptor in the catalytic mechanism. Residues cysteine 145, cysteine 148, cysteine 183, and histidine 186 each coordinate Zn(2+).

It belongs to the thymidine kinase family. Homotetramer.

It is found in the cytoplasm. It catalyses the reaction thymidine + ATP = dTMP + ADP + H(+). The polypeptide is Thymidine kinase (Macrococcus caseolyticus (strain JCSC5402) (Macrococcoides caseolyticum)).